The following is a 99-amino-acid chain: Cysteine-rich C-terminal protein 1 (99 aa).

Disordered stretches follow at residues 1–42 (MSSQ…CCGS) and 65–99 (RRRR…CSGC). A compositionally biased stretch (pro residues) spans 22-32 (APCPAPAPTPA). The span at 83–99 (QRSQRSNNRSSGCCSGC) shows a compositional bias: low complexity.

This is Cysteine-rich C-terminal protein 1 (CRCT1) from Homo sapiens (Human).